Consider the following 162-residue polypeptide: MRISKPHLRSISIQCYLCLLLKSHFLTEAGIHVFILGCFSAGLPKTEANWVNVISDLKKIEDLIQSMHIDATLYTESDVHPSCKVTAMKCFLLELQVISHESGDTDIHDTVENLIILANNILSSNGNITESGCKECEELEEKNIKEFLQSFVHIVQMFINTS.

The signal sequence occupies residues methionine 1–alanine 29. Positions glycine 30–alanine 48 are excised as a propeptide. 2 cysteine pairs are disulfide-bonded: cysteine 83–cysteine 133 and cysteine 90–cysteine 136. N-linked (GlcNAc...) asparagine glycosylation is present at asparagine 127.

This sequence belongs to the IL-15/IL-21 family.

Its subcellular location is the secreted. Functionally, cytokine that plays a major role in the development of inflammatory and protective immune responses to microbial invaders and parasites by modulating immune cells of both the innate and adaptive immune systems. Stimulates the proliferation of natural killer cells, T-cells and B-cells and promotes the secretion of several cytokines. In monocytes, induces the production of IL8 and monocyte chemotactic protein 1/CCL2, two chemokines that attract neutrophils and monocytes respectively to sites of infection. Unlike most cytokines, which are secreted in soluble form, IL15 is expressed in association with its high affinity IL15RA on the surface of IL15-producing cells and delivers signals to target cells that express IL2RB and IL2RG receptor subunits. Binding to its receptor triggers the phosphorylation of JAK1 and JAK3 and the recruitment and subsequent phosphorylation of signal transducer and activator of transcription-3/STAT3 and STAT5. In mast cells, induces the rapid tyrosine phosphorylation of STAT6 and thereby controls mast cell survival and release of cytokines such as IL4. This chain is Interleukin-15 (IL15), found in Chlorocebus aethiops (Green monkey).